Reading from the N-terminus, the 1416-residue chain is DNA-directed RNA polymerase subunit beta' (1416 aa).

Zn(2+) is bound by residues Cys71, Cys73, Cys86, and Cys89. Residues Asp461, Asp463, and Asp465 each coordinate Mg(2+). Zn(2+)-binding residues include Cys815, Cys889, Cys896, and Cys899.

It belongs to the RNA polymerase beta' chain family. In terms of assembly, the RNAP catalytic core consists of 2 alpha, 1 beta, 1 beta' and 1 omega subunit. When a sigma factor is associated with the core the holoenzyme is formed, which can initiate transcription. Mg(2+) serves as cofactor. The cofactor is Zn(2+).

It carries out the reaction RNA(n) + a ribonucleoside 5'-triphosphate = RNA(n+1) + diphosphate. DNA-dependent RNA polymerase catalyzes the transcription of DNA into RNA using the four ribonucleoside triphosphates as substrates. This is DNA-directed RNA polymerase subunit beta' from Haemophilus influenzae (strain 86-028NP).